A 230-amino-acid polypeptide reads, in one-letter code: tRNA (guanine-N(1)-)-methyltransferase (230 aa).

S-adenosyl-L-methionine-binding positions include Gly114 and 138 to 143 (IGDYVL).

Belongs to the RNA methyltransferase TrmD family. As to quaternary structure, homodimer.

It is found in the cytoplasm. The catalysed reaction is guanosine(37) in tRNA + S-adenosyl-L-methionine = N(1)-methylguanosine(37) in tRNA + S-adenosyl-L-homocysteine + H(+). In terms of biological role, specifically methylates guanosine-37 in various tRNAs. This is tRNA (guanine-N(1)-)-methyltransferase from Rhodococcus jostii (strain RHA1).